We begin with the raw amino-acid sequence, 394 residues long: Obg-like ATPase 1 (394 aa).

Positions 21 to 285 (LKAGIVGLAN…MSPEDAEEEL (265 aa)) constitute an OBG-type G domain. Residue 30–35 (NVGKST) participates in ATP binding. Mg(2+)-binding residues include Ser34 and Thr55. Thr89 is subject to Phosphothreonine. Lys98 is covalently cross-linked (Glycyl lysine isopeptide (Lys-Gly) (interchain with G-Cter in ubiquitin)). Phosphoserine occurs at positions 116 and 119. Leu233 lines the ATP pocket. One can recognise a TGS domain in the interval 306 to 389 (DLISFFTCGP…EDGDIIYFRA (84 aa)).

This sequence belongs to the TRAFAC class OBG-HflX-like GTPase superfamily. OBG GTPase family. YchF/OLA1 subfamily. Monomer. Interacts with the 26S proteasome subunit RPT6. It depends on Mg(2+) as a cofactor.

The protein localises to the cytoplasm. Functionally, hydrolyzes ATP, and can also hydrolyze GTP with lower efficiency. Has lower affinity for GTP. This is Obg-like ATPase 1 from Saccharomyces cerevisiae (strain ATCC 204508 / S288c) (Baker's yeast).